The sequence spans 464 residues: Anthocyanidin 3-O-galactosyltransferase 3GT1 (464 aa).

Residues serine 19 and histidine 21 each contribute to the an anthocyanidin site. Histidine 21 serves as the catalytic Proton acceptor. Asparagine 38 carries N-linked (GlcNAc...) asparagine glycosylation. Aspartate 121 (charge relay) is an active-site residue. An anthocyanidin is bound at residue histidine 152. Alanine 342, glutamine 344, histidine 359, tryptophan 362, asparagine 363, serine 364, and glutamate 367 together coordinate UDP-alpha-D-glucose. Residue glycine 382 participates in an anthocyanidin binding. Aspartate 383 lines the UDP-alpha-D-glucose pocket.

It belongs to the UDP-glycosyltransferase family. Monomer. As to expression, mostly expressed in leaves and flowers and, to a lower extent, in roots. In flowers, mainly observed in petals, toruses and scapes, and at lower levels in pistils and stamens.

It carries out the reaction cyanidin + UDP-alpha-D-galactose = cyanidin 3-O-beta-D-galactoside + UDP + H(+). The catalysed reaction is cyanidin + UDP-alpha-D-glucose = cyanidin 3-O-beta-D-glucoside + UDP + H(+). The enzyme catalyses delphinidin + UDP-alpha-D-glucose = delphinidin 3-O-beta-D-glucoside + UDP. It catalyses the reaction malvidin + UDP-alpha-D-glucose = malvidin 3-O-beta-D-glucoside + UDP. It carries out the reaction delphinidin + UDP-alpha-D-galactose = delphinidin 3-O-beta-D-galactoside + UDP + H(+). The catalysed reaction is pelargonidin + UDP-alpha-D-galactose = pelargonidin 3-O-beta-D-galactoside betaine + UDP. The enzyme catalyses peonidin + UDP-alpha-D-galactose = peonidin 3-O-beta-D-galactoside + UDP. It catalyses the reaction malvidin + UDP-alpha-D-galactose = malvidin 3-O-beta-D-galactoside + UDP + H(+). It carries out the reaction petunidin + UDP-alpha-D-galactose = petunidin 3-O-beta-D-galactoside + UDP. The catalysed reaction is an anthocyanidin + UDP-alpha-D-glucose + H(+) = an anthocyanidin 3-O-beta-D-glucoside + UDP. The enzyme catalyses an anthocyanidin + UDP-alpha-D-galactose = an anthocyanidin 3-O-beta-D-galactoside + UDP. Its pathway is pigment biosynthesis; anthocyanin biosynthesis. Flavonoid 3-O-glycosyltransferase involved in the biosynthesis of anthocyanins conferring flower red/pink colors, mainly anthocyanidin 3-O-glycosides. Catalyzes the addition of UDP-sugar to the 3-OH of anthocyanidin, with a preference for UDP-galactose (UDP-Gal) as sugar donor and cyanidin as substrate; able to use delphinidin, pelargonidin, peonidin, malvidin and petunidin as substrates in the presence of UDP-Gal. Can also use UDP-glucose (UDP-Glu) as sugar donor with delphinidin, cyanidin and malvidin as substrates, but not active on pelargonidin, peonidin and petunidin. In Rhododendron delavayi (Rhododendron), this protein is Anthocyanidin 3-O-galactosyltransferase 3GT1.